The primary structure comprises 721 residues: Polyribonucleotide nucleotidyltransferase (721 aa).

Mg(2+)-binding residues include aspartate 495 and aspartate 501. The KH domain maps to 562-621; the sequence is PRLLSFRIDPELIGTVIGPGGRTIKNITERTNTKIDIEDSGIVTIASHDGAAAEEAQKII. Positions 631–699 constitute an S1 motif domain; that stretch reads GEVFTGSITR…NRGRINLTLR (69 aa). Positions 700–721 are disordered; that stretch reads GVPQSGESADSQPAPTPVAPLS.

Belongs to the polyribonucleotide nucleotidyltransferase family. Mg(2+) is required as a cofactor.

The protein localises to the cytoplasm. The catalysed reaction is RNA(n+1) + phosphate = RNA(n) + a ribonucleoside 5'-diphosphate. Its function is as follows. Involved in mRNA degradation. Catalyzes the phosphorolysis of single-stranded polyribonucleotides processively in the 3'- to 5'-direction. This chain is Polyribonucleotide nucleotidyltransferase, found in Synechococcus sp. (strain CC9311).